The sequence spans 529 residues: Peptide chain release factor 3 (529 aa).

A tr-type G domain is found at serine 11–leucine 280. Residues serine 20 to threonine 27, aspartate 88 to histidine 92, and asparagine 142 to aspartate 145 contribute to the GTP site.

Belongs to the TRAFAC class translation factor GTPase superfamily. Classic translation factor GTPase family. PrfC subfamily.

Its subcellular location is the cytoplasm. In terms of biological role, increases the formation of ribosomal termination complexes and stimulates activities of RF-1 and RF-2. It binds guanine nucleotides and has strong preference for UGA stop codons. It may interact directly with the ribosome. The stimulation of RF-1 and RF-2 is significantly reduced by GTP and GDP, but not by GMP. This is Peptide chain release factor 3 from Vibrio vulnificus (strain CMCP6).